The chain runs to 374 residues: 1,3,6,8-tetrahydroxynaphthalene synthase (374 aa).

Cys138 is an active-site residue.

It belongs to the thiolase-like superfamily. Chalcone/stilbene synthases family. As to quaternary structure, homodimer.

The enzyme catalyses 5 malonyl-CoA + 5 H(+) = naphthalene-1,3,6,8-tetrol + 5 CO2 + 5 CoA + H2O. It participates in pigment biosynthesis; melanin biosynthesis. Functionally, involved in the biosynthesis of melanin but also various secondary metabolites containing a naphthoquinone ring. Catalyzes the iterative condensation of five CoA-linked malonyl units to form a pentaketide intermediate. THNS subsequently catalyzes the dual intramolecular Claisen and aldol condensations of this linear intermediate to produce the fused ring of 1,3,6,8-tetrahydroxynaphthalene (THN). The protein is 1,3,6,8-tetrahydroxynaphthalene synthase of Streptomyces coelicolor (strain ATCC BAA-471 / A3(2) / M145).